We begin with the raw amino-acid sequence, 341 residues long: Putative UPF0607 protein ENSP00000381514 (341 aa).

The span at 78–89 (AEEPKEATEVKD) shows a compositional bias: basic and acidic residues. 2 disordered regions span residues 78-131 (AEEP…NPRP) and 216-282 (GLLT…KLPC). The span at 108–127 (EAASTSRPLETQGNLTSSWY) shows a compositional bias: polar residues. A compositionally biased stretch (basic residues) spans 243-252 (AGHRSRKRKL).

The protein belongs to the UPF0607 family.

The polypeptide is Putative UPF0607 protein ENSP00000381514 (Homo sapiens (Human)).